A 297-amino-acid chain; its full sequence is UPF0761 membrane protein VC0395_A2314/VC395_2854 (297 aa).

A run of 6 helical transmembrane segments spans residues Leu43–Phe63, Met100–Asp120, Ala135–Ala155, Phe181–Val201, Leu213–Ile233, and Ala245–Val265.

The protein belongs to the UPF0761 family.

It localises to the cell inner membrane. The chain is UPF0761 membrane protein VC0395_A2314/VC395_2854 from Vibrio cholerae serotype O1 (strain ATCC 39541 / Classical Ogawa 395 / O395).